Reading from the N-terminus, the 107-residue chain is SH3 domain-binding glutamic acid-rich-like protein 2 (107 aa).

Residues 61 to 67 (QGNPLPP) carry the SH3-binding motif.

This sequence belongs to the SH3BGR family.

It is found in the nucleus. This Bos taurus (Bovine) protein is SH3 domain-binding glutamic acid-rich-like protein 2 (SH3BGRL2).